The following is a 525-amino-acid chain: Protein disulfide-isomerase A2 (525 aa).

The first 21 residues, 1-21, serve as a signal peptide directing secretion; that stretch reads MSCQLLPVLLLLLLRASCPWG. The Thioredoxin 1 domain maps to 27–152; that stretch reads RSPSEEPPEE…IAEWLRRRVG (126 aa). Active-site nucleophile residues include C71 and C74. A disulfide bridge links C71 with C74. 2 N-linked (GlcNAc...) asparagine glycosylation sites follow: N127 and N284. The region spanning 367–496 is the Thioredoxin 2 domain; it reads VLNGQVKPYL…FSKFLDNGGV (130 aa). Catalysis depends on nucleophile residues C418 and C421. An intrachain disulfide couples C418 to C421. A disordered region spans residues 498 to 525; sequence PTEEPLEEPAAPFPEPPANSTMGSKEEL. The N-linked (GlcNAc...) asparagine glycan is linked to N516. Polar residues predominate over residues 516–525; that stretch reads NSTMGSKEEL. The Prevents secretion from ER motif lies at 522–525; the sequence is KEEL.

This sequence belongs to the protein disulfide isomerase family. As to quaternary structure, monomer; predominantly as monomer under reducing conditions. Homodimer; disulfide-linked. Part of a large chaperone multiprotein complex comprising DNAJB11, HSP90B1, HSPA5, HYOU, PDIA2, PDIA4, PDIA6, PPIB, SDF2L1, UGGT1 and very small amounts of ERP29, but not, or at very low levels, CALR nor CANX. In terms of processing, the disulfide-linked homodimer exhibits an enhanced chaperone activity. Glycosylated.

The protein resides in the endoplasmic reticulum lumen. The catalysed reaction is Catalyzes the rearrangement of -S-S- bonds in proteins.. Functionally, acts as an intracellular estrogen-binding protein. May be involved in modulating cellular levels and biological functions of estrogens in the pancreas. May act as a chaperone that inhibits aggregation of misfolded proteins. This Pongo abelii (Sumatran orangutan) protein is Protein disulfide-isomerase A2 (PDIA2).